Consider the following 953-residue polypeptide: 26S proteasome non-ATPase regulatory subunit 1 (953 aa).

M1 carries the post-translational modification N-acetylmethionine. The residue at position 273 (T273) is a Phosphothreonine. The interval 279 to 318 is disordered; it reads PGSTNTGTVPGSEKDSDSMETEEKTSSAFVGKTPEASPEP. S290 is subject to Phosphoserine. A compositionally biased stretch (basic and acidic residues) spans 290 to 303; that stretch reads SEKDSDSMETEEKT. K310 carries the post-translational modification N6-acetyllysine. A Phosphothreonine modification is found at T311. A Phosphoserine modification is found at S315. PC repeat units lie at residues 403 to 436, 441 to 474, 476 to 510, 511 to 545, 547 to 580, 581 to 616, 617 to 649, 651 to 685, 686 to 726, and 729 to 761; these read TATASLGVIHKGHEKEALQLMATYLPKDTSPGSA, GGLYALGLIHANHGGDIIDYLLNQLKNASNDIVR, GGSLGLGLAAMGTARQDVYDLLKTNLYQDDAVTGE, AAGLALGLVMLGSKNAQAIEDMVGYAQETQHEKIL, GLAVGIALVMYGRMEEADALIESLCRDKDPILRR, SGMYTVAMAYCGSGNNKAIRRLLHVAVSDVNDDVRR, AAVESLGFILFRTPEQCPSVVSLLSESYNPHVR, GAAMALGICCAGTGNKEAINLLEPMTNDPVNYVRQ, GALI…DVMA, and GAILAQGILDAGGHNVTISLQSRTGHTHMPSVV. K720 is subject to N6-acetyllysine. T830 is subject to Phosphothreonine. S834 bears the Phosphoserine mark. Disordered regions lie at residues 839 to 881 and 930 to 953; these read AKKK…LDNP and AHGPKIEEEEQEPEPPEPFEYIDD. 2 stretches are compositionally biased toward basic and acidic residues: residues 842-852 and 859-872; these read KEKEKEKKEEE and AEKKEEKEKKKEPE. The span at 936–953 shows a compositional bias: acidic residues; it reads EEEEQEPEPPEPFEYIDD.

The protein belongs to the proteasome subunit S1 family. As to quaternary structure, component of the 19S proteasome regulatory particle complex. The 26S proteasome consists of a 20S core particle (CP) and two 19S regulatory subunits (RP). The regulatory particle is made of a lid composed of 9 subunits, a base containing 6 ATPases and few additional components including PSMD1. Interacts with ADRM1. Interacts with ZFAND1.

Its function is as follows. Component of the 26S proteasome, a multiprotein complex involved in the ATP-dependent degradation of ubiquitinated proteins. This complex plays a key role in the maintenance of protein homeostasis by removing misfolded or damaged proteins, which could impair cellular functions, and by removing proteins whose functions are no longer required. Therefore, the proteasome participates in numerous cellular processes, including cell cycle progression, apoptosis, or DNA damage repair. This is 26S proteasome non-ATPase regulatory subunit 1 (PSMD1) from Homo sapiens (Human).